The sequence spans 173 residues: Translation initiation factor IF-3 (173 aa).

Belongs to the IF-3 family. In terms of assembly, monomer.

It localises to the cytoplasm. IF-3 binds to the 30S ribosomal subunit and shifts the equilibrium between 70S ribosomes and their 50S and 30S subunits in favor of the free subunits, thus enhancing the availability of 30S subunits on which protein synthesis initiation begins. The polypeptide is Translation initiation factor IF-3 (Enterococcus faecalis (strain ATCC 700802 / V583)).